The primary structure comprises 236 residues: MGRRYWNINLEEMMEAGIHFGHVTNKWNPRMAPYISSKRKGIHITNLTITARFLSEACDLVFDAASRGKRFLIVGTKKKAADLVASAAIKARCHYVNKKWLGGMLTNWSTTETRLQKFRDLRAEQKMGKLNRLPKGDAAMLKRKLSTLQAYLGGIKYMTGLPDIVIIVDQQEEYTVLRECVILGIPTICLIDTNCDPDLADISIPANDDAIASIRLILTKLVSAICEGHSSYIKKG.

The protein belongs to the universal ribosomal protein uS2 family.

It localises to the plastid. Its subcellular location is the chloroplast. The polypeptide is Small ribosomal subunit protein uS2c (rps2) (Phalaenopsis aphrodite subsp. formosana (Moth orchid)).